Reading from the N-terminus, the 299-residue chain is Prohibitin-2 (299 aa).

Residue alanine 2 is modified to N-acetylalanine. The interval methionine 19–alanine 49 is necessary for transcriptional repression. Tyrosine 128 carries the phosphotyrosine modification. Lysine 147 is modified (N6-acetyllysine). The segment at alanine 150–aspartate 174 is necessary for transcriptional repression. The residue at position 151 (serine 151) is a Phosphoserine. The stretch at serine 190–leucine 238 forms a coiled coil. N6-acetyllysine occurs at positions 200, 236, 250, and 262.

The protein belongs to the prohibitin family. As to quaternary structure, the mitochondrial prohibitin complex consists of two subunits (PHB1 and PHB2), assembled into a membrane-associated ring-shaped supercomplex of approximately 1 mDa. Interacts with ESR1, HDAC1 and HDAC5. Interacts with ZNF703. Interacts with STOML2. Interacts with ARFGEF3. Interacts with SPHK2. Interacts with COX4I1; the interaction associates PHB2 with COX. Interacts with MAP1LC3B (membrane-bound form LC3-II); the interaction is direct and upon mitochondrial depolarization and proteasome-dependent outer membrane rupture. Interacts with IGFBP6 (via C-terminal domain). Interacts with CLPB. Interacts with CD86 (via cytoplasmic domain); the interactions increases after priming with CD40. Interacts with AFG3L2. Interacts with DNAJC19. Interacts with AKT2; this interaction may be important for myogenic differentiation. Phosphorylated. Tyrosine phosphorylation is indirectly stimulated by IGFBP6.

It is found in the mitochondrion inner membrane. Its subcellular location is the cytoplasm. The protein localises to the nucleus. It localises to the cell membrane. Functionally, protein with pleiotropic attributes mediated in a cell-compartment- and tissue-specific manner, which include the plasma membrane-associated cell signaling functions, mitochondrial chaperone, and transcriptional co-regulator of transcription factors and sex steroid hormones in the nucleus. Its function is as follows. In the mitochondria, together with PHB, forms large ring complexes (prohibitin complexes) in the inner mitochondrial membrane (IMM) and functions as a chaperone protein that stabilizes mitochondrial respiratory enzymes and maintains mitochondrial integrity in the IMM, which is required for mitochondrial morphogenesis, neuronal survival, and normal lifespan. The prohibitin complex, with DNAJC19, regulates cardiolipin remodeling and the protein turnover of OMA1 in a cardiolipin-binding manner. Also regulates cytochrome-c oxidase assembly (COX) and mitochondrial respiration. Binding to sphingoid 1-phosphate (SPP) modulates its regulator activity. Has a key role of mitophagy receptor involved in targeting mitochondria for autophagic degradation. Involved in mitochondrial-mediated antiviral innate immunity, activates RIG-I-mediated signal transduction and production of IFNB1 and pro-inflammatory cytokine IL6. In terms of biological role, in the nucleus, serves as transcriptional co-regulator. Acts as a mediator of transcriptional repression by nuclear hormone receptors via recruitment of histone deacetylases. Functions as an estrogen receptor (ER)-selective coregulator that potentiates the inhibitory activities of antiestrogens and represses the activity of estrogens. Competes with NCOA1 for modulation of ER transcriptional activity. In the plasma membrane, is involved in IGFBP6-induced cell migration. Cooperates with CD86 to mediate CD86-signaling in B lymphocytes that regulates the level of IgG1 produced through the activation of distal signaling intermediates. Upon CD40 engagement, required to activate NF-kappa-B signaling pathway via phospholipase C and protein kinase C activation. The sequence is that of Prohibitin-2 from Rattus norvegicus (Rat).